Reading from the N-terminus, the 123-residue chain is Small ribosomal subunit protein uS12 (123 aa).

At Asp-89 the chain carries 3-methylthioaspartic acid.

This sequence belongs to the universal ribosomal protein uS12 family. As to quaternary structure, part of the 30S ribosomal subunit. Contacts proteins S8 and S17. May interact with IF1 in the 30S initiation complex.

Functionally, with S4 and S5 plays an important role in translational accuracy. Interacts with and stabilizes bases of the 16S rRNA that are involved in tRNA selection in the A site and with the mRNA backbone. Located at the interface of the 30S and 50S subunits, it traverses the body of the 30S subunit contacting proteins on the other side and probably holding the rRNA structure together. The combined cluster of proteins S8, S12 and S17 appears to hold together the shoulder and platform of the 30S subunit. The polypeptide is Small ribosomal subunit protein uS12 (Bartonella tribocorum (strain CIP 105476 / IBS 506)).